The following is a 1503-amino-acid chain: Protein Skeletor, isoforms D/E (1503 aa).

Residues 1 to 28 form the signal peptide; it reads MLAMKDKPWLLLFGLLAALSCLASFGDA. 2 DM13 domains span residues 34–143 and 151–258; these read GTKI…VSIP and PQKI…VRLP. Residues 287-419 form the DOMON domain; the sequence is LAFEVRWAVA…GAESVVWAIG (133 aa). Disordered stretches follow at residues 451–491, 830–857, 1086–1106, and 1426–1503; these read PLPE…NVEP, NPNLNPNHPNQNPIPNPHQKPNVTPTEI, IFNQPGGKGKGDQKPKASSVS, and EFRG…GRRA. A compositionally biased stretch (low complexity) spans 830–840; it reads NPNLNPNHPNQ. Over residues 1452-1491 the composition is skewed to low complexity; it reads SSSSGSTIYPYSSSTGASTSTVSSSASSPLSSSSLRPIST.

Interacts with Chro and Mgtor as part of a macromolecular complex forming the spindle matrix. Chro colocalizes with Skeletor (Skel) on the chromosomes at interphase and on spindle during metaphase.

Its subcellular location is the cytoplasm. It localises to the cytoskeleton. The protein resides in the spindle. It is found in the nucleus. The protein localises to the nucleolus. Its subcellular location is the chromosome. Its function is as follows. Provides structural support to stabilize and organize the microtubule spindle during mitosis (within embryonic somatic cells) and meiosis (within spermatocytes). The role in mitosis regulation depends on the Ran pathway. The protein is Protein Skeletor, isoforms D/E of Drosophila melanogaster (Fruit fly).